Here is a 399-residue protein sequence, read N- to C-terminus: Forkhead box protein A4-A (399 aa).

The fork-head DNA-binding region spans 119–213 (KPPYSYISLI…ENGCYLRRQK (95 aa)). Basic and acidic residues predominate over residues 219–234 (RSKSGEGEKKVNKPGE). The segment at 219–290 (RSKSGEGEKK…VGLSPTSEQA (72 aa)) is disordered. Polar residues predominate over residues 267–277 (STGSSIHQACG).

In terms of tissue distribution, during stages 8.5 to 10, expressed in the part of the dorsal mesoderm invaginating the dorsal blastopore lip (Spemann organizer), as a direct response to dorsal mesodermal induction. At stage 12 (mid-gastrulation), restricted to the dorsal midline in the deeper layers of mesodermal cells. Continuously present in the posterior portion of invaginated mesoderm and expressed within the notochord. Also present in the midline of the neural plate during gastrulation, but absent from the notoplate in exogastrula embryos. Expression in the notochord continues in neurula-stage embryos and at stage 20 in addition to the notochord, expression is seen in the pharyngeal endoderm.

It is found in the nucleus. Functionally, transcriptional repressor involved in embryonic nervous system development. Plays a role in the induction and patterning of the anterior-posterior neural axis. Involved in the establishment of floor plate differentiation from neural plate cells during gastrulation. Binds the anf1 promoter sequence to restrict expression of anf1 to the anterior of the neural plate, thereby patterning the forebrain. Can bind to the HNF-3-alpha DNA target sequence. Cooperates with t/bra in a dose-dependent manner to specify dorsal mesoderm formation, including notochord. Binds to DNA via the target sequence 5'-[GA]TAAA[TC]A-3', with 5'-GTAAATA-3' being the preferred binding site. This is Forkhead box protein A4-A (foxa4-a) from Xenopus laevis (African clawed frog).